A 387-amino-acid polypeptide reads, in one-letter code: 3-ketoacyl-CoA thiolase (387 aa).

Cys91 (acyl-thioester intermediate) is an active-site residue. Active-site proton acceptor residues include His343 and Cys373.

It belongs to the thiolase-like superfamily. Thiolase family. As to quaternary structure, heterotetramer of two alpha chains (FadB) and two beta chains (FadA).

It is found in the cytoplasm. It catalyses the reaction an acyl-CoA + acetyl-CoA = a 3-oxoacyl-CoA + CoA. Its pathway is lipid metabolism; fatty acid beta-oxidation. In terms of biological role, catalyzes the final step of fatty acid oxidation in which acetyl-CoA is released and the CoA ester of a fatty acid two carbons shorter is formed. In Shigella dysenteriae serotype 1 (strain Sd197), this protein is 3-ketoacyl-CoA thiolase.